The primary structure comprises 299 residues: Cytosolic sulfotransferase 1 (299 aa).

51–56 is a 3'-phosphoadenylyl sulfate binding site; sequence KAGTTW. The active-site Proton acceptor is the histidine 113. 3'-phosphoadenylyl sulfate-binding positions include arginine 135, serine 143, tyrosine 199, 233-238, and 261-263; these read VQFDAM and RKG.

The protein belongs to the sulfotransferase 1 family. Expressed in liver.

The protein localises to the cytoplasm. Inhibited by Co(2+), Zn(2+), Cd(2+) and Pb(2+) ions. Inactivated by Hg(2+) and Cu(2+) ions. Sulfotransferase that utilizes 3'-phospho-5'-adenylyl sulfate (PAPS) as sulfonate donor to catalyze the sulfate conjugation of a variety of xenobiotic and endogenous compounds, including 2-naphthol, hydroxychlorobiphenyls, dopamine and T3 (triiodo-L-thyronine). The sequence is that of Cytosolic sulfotransferase 1 from Danio rerio (Zebrafish).